Consider the following 69-residue polypeptide: Photosystem I reaction center subunit IV (69 aa).

This sequence belongs to the PsaE family.

It localises to the cellular thylakoid membrane. Its function is as follows. Stabilizes the interaction between PsaC and the PSI core, assists the docking of the ferredoxin to PSI and interacts with ferredoxin-NADP oxidoreductase. The chain is Photosystem I reaction center subunit IV from Prochlorococcus marinus (strain MIT 9515).